We begin with the raw amino-acid sequence, 122 residues long: UPF0102 protein Mpe_A3766 (122 aa).

It belongs to the UPF0102 family.

The protein is UPF0102 protein Mpe_A3766 of Methylibium petroleiphilum (strain ATCC BAA-1232 / LMG 22953 / PM1).